A 155-amino-acid chain; its full sequence is Small ribosomal subunit protein uS7cz/uS7cy (155 aa).

The protein belongs to the universal ribosomal protein uS7 family. As to quaternary structure, part of the 30S ribosomal subunit.

The protein localises to the plastid. It is found in the chloroplast. In terms of biological role, one of the primary rRNA binding proteins, it binds directly to 16S rRNA where it nucleates assembly of the head domain of the 30S subunit. This is Small ribosomal subunit protein uS7cz/uS7cy (rps7-A) from Ipomoea purpurea (Common morning glory).